The following is a 547-amino-acid chain: Sodium-coupled neutral amino acid transporter 4 (547 aa).

Residues 1–34 form a disordered region; it reads MDPMELNNVSIEPDGDSCSGDSIQDSYTGMENSD. Over 1-104 the chain is Extracellular; the sequence is MDPMELNNVS…GLSYAMANTG (104 aa). Polar residues predominate over residues 19–31; it reads SGDSIQDSYTGME. Ser-49 is modified (phosphoserine). A helical transmembrane segment spans residues 105-125; that stretch reads IILFIIMLLTVAILSLYSVHL. Over 126-151 the chain is Cytoplasmic; that stretch reads LLKTAKEGGSLIYEKLGEKAFGWPGK. A helical transmembrane segment spans residues 152 to 172; the sequence is IGAFISITMQNIGAMSSYLFI. Topologically, residues 173-195 are extracellular; the sequence is IKYELPEVIRAFMGLEENTGEWY. Residues 196–216 traverse the membrane as a helical segment; sequence LNGNYLVLFVSVGIILPLSLL. The Cytoplasmic segment spans residues 217–220; sequence KNLG. Residues 221–241 traverse the membrane as a helical segment; sequence YLGYTSGFSLSCMVFFVSVVI. The Extracellular portion of the chain corresponds to 242–332; it reads YKKFQIPCPL…PKYFVFNSRT (91 aa). An intrachain disulfide couples Cys-249 to Cys-321. N-linked (GlcNAc...) asparagine glycosylation is found at Asn-260, Asn-264, and Asn-276. Residues 333 to 353 traverse the membrane as a helical segment; it reads AYAIPILAFAFVCHPEVLPIY. Residues 354–369 are Cytoplasmic-facing; the sequence is SELKDRSRRKMQTVSN. Residues 370-390 traverse the membrane as a helical segment; it reads ISISGMLVMYLLAALFGYLSF. Over 391–411 the chain is Extracellular; the sequence is YGDVEDELLHAYSKVYTFDTA. A helical transmembrane segment spans residues 412–432; sequence LLMVRLAVLVAVTLTVPIVLF. The Cytoplasmic portion of the chain corresponds to 433 to 453; sequence PIRTSVITLLFPRKPFSWLKH. Residues 454–474 traverse the membrane as a helical segment; it reads FGIAAIIIALNNILVILVPTI. The Extracellular segment spans residues 475–476; the sequence is KY. A helical transmembrane segment spans residues 477–497; that stretch reads IFGFIGASSATMLIFILPAAF. At 498-514 the chain is on the cytoplasmic side; the sequence is YLKLVKKEPLRSPQKIG. The helical transmembrane segment at 515 to 535 threads the bilayer; the sequence is ALVFLVTGIIFMMGSMALIIL. Over 536 to 547 the chain is Extracellular; the sequence is DWIYNPPNPNHH.

This sequence belongs to the amino acid/polyamine transporter 2 family. Post-translationally, the disulfide bond plays an important role in substrate transport, but has no effect on trafficking to the cell surface. As to expression, detected in liver, in hepatocytes surrounding the central vein. Not detected in heart, kidney, brain, lung, small intestine, spleen and thymus. Highly expressed in placenta.

Its subcellular location is the cell membrane. It is found in the cell projection. The protein resides in the microvillus membrane. The enzyme catalyses L-alanine(in) + Na(+)(in) = L-alanine(out) + Na(+)(out). It carries out the reaction L-methionine(in) + Na(+)(in) = L-methionine(out) + Na(+)(out). It catalyses the reaction L-asparagine(in) + Na(+)(in) = L-asparagine(out) + Na(+)(out). The catalysed reaction is L-threonine(in) + Na(+)(in) = L-threonine(out) + Na(+)(out). The enzyme catalyses L-serine(in) + Na(+)(in) = L-serine(out) + Na(+)(out). It carries out the reaction glycine(in) + Na(+)(in) = glycine(out) + Na(+)(out). It catalyses the reaction L-glutamine(in) + Na(+)(in) = L-glutamine(out) + Na(+)(out). The catalysed reaction is L-histidine(in) + Na(+)(in) = L-histidine(out) + Na(+)(out). The enzyme catalyses L-cysteine(in) + Na(+)(in) = L-cysteine(out) + Na(+)(out). It carries out the reaction L-proline(in) + Na(+)(in) = L-proline(out) + Na(+)(out). In terms of biological role, symporter that cotransports neutral amino acids and sodium ions from the extraccellular to the intracellular side of the cell membrane. The transport is electrogenic, pH dependent and partially tolerates substitution of Na(+) by Li(+). Preferentially transports smaller amino acids, such as glycine, L-alanine, L-serine, L-asparagine and L-threonine, followed by L-cysteine, L-histidine, L-proline and L-glutamine and L-methionine. The sequence is that of Sodium-coupled neutral amino acid transporter 4 from Mus musculus (Mouse).